Consider the following 492-residue polypeptide: uncharacterized protein (492 aa).

Residues 30 to 46 (YVCLSVAVAAVGYANYM) traverse the membrane as a helical segment. The 67-residue stretch at 144-210 (NYYDVLNVNE…IRKNIYDNEG (67 aa)) folds into the J domain.

Its subcellular location is the membrane. This is an uncharacterized protein from Plasmodium falciparum (isolate 3D7).